The sequence spans 132 residues: Extracellular small neutral protease (132 aa).

The Ca(2+) site is built by D76 and T78. H83 is a Zn(2+) binding site. The active site involves E84. Zn(2+) is bound by residues H87 and D93. A disulfide bridge links C99 with C112.

It belongs to the peptidase M7 family. Ca(2+) is required as a cofactor. It depends on Zn(2+) as a cofactor.

Its subcellular location is the secreted. It catalyses the reaction Hydrolyzes proteins with a preference for Tyr or Phe in the P1' position. Has no action on amino-acid p-nitroanilides.. Specifically hydrolyzes the peptide bond at the imino side of aromatic residues. This is Extracellular small neutral protease (snpA) from Streptomyces caespitosus.